The following is a 201-amino-acid chain: Twist-related protein 1 (201 aa).

The span at 1–18 (MMQDVSSSPVSPADDSLS) shows a compositional bias: low complexity. Residues 1–106 (MMQDVSSSPV…GGGSPQSYEE (106 aa)) form a disordered region. The span at 34–43 (RGGRKRRSSR) shows a compositional bias: basic residues. 2 stretches are compositionally biased toward gly residues: residues 46 to 65 (AGGG…GGDE) and 80 to 100 (GCGG…GGGS). The region spanning 109-160 (TQRVMANVRERQRTQSLNEAFAALPKIIPTLPSDKLSKIQTLKLAARYIDFL) is the bHLH domain. The segment at 162–190 (QVLQSDELDSKMASYVAHERLSYAFSVWR) is sufficient for transactivation activity.

As to quaternary structure, efficient DNA binding requires dimerization with another bHLH protein. Homodimer or heterodimer with E proteins such as TCF3. ID1 binds preferentially to TCF3 but does not interact efficiently with TWIST1 so ID1 levels control the amount of TCF3 available to dimerize with TWIST and thus determine the type of dimer formed.

It localises to the nucleus. Its function is as follows. Acts as a transcriptional regulator. Inhibits myogenesis by sequestrating E proteins, inhibiting trans-activation by MEF2, and inhibiting DNA-binding by MYOD1 through physical interaction. This interaction probably involves the basic domains of both proteins. Also represses expression of pro-inflammatory cytokines such as TNFA and IL1B. Regulates cranial suture patterning and fusion. Activates transcription as a heterodimer with E proteins. Regulates gene expression differentially, depending on dimer composition. Homodimers induce expression of FGFR2 and POSTN while heterodimers repress FGFR2 and POSTN expression and induce THBS1 expression. Heterodimerization is also required for osteoblast differentiation. Represses the activity of the circadian transcriptional activator: NPAS2-BMAL1 heterodimer. The protein is Twist-related protein 1 (TWIST1) of Pan troglodytes (Chimpanzee).